The following is a 218-amino-acid chain: Small ribosomal subunit protein uS3c (218 aa).

Residues 47–118 (VQKNMRTSSG…KLNIAVTRIA (72 aa)) form the KH type-2 domain.

It belongs to the universal ribosomal protein uS3 family. As to quaternary structure, part of the 30S ribosomal subunit.

The protein resides in the plastid. Its subcellular location is the chloroplast. In Nicotiana sylvestris (Wood tobacco), this protein is Small ribosomal subunit protein uS3c (rps3).